The sequence spans 946 residues: Bifunctional glutamine synthetase adenylyltransferase/adenylyl-removing enzyme (946 aa).

Residues 1-441 form an adenylyl removase region; that stretch reads MSLLNDAALH…EFNWVIGDDE (441 aa). Positions 448 to 946 are adenylyl transferase; the sequence is DQALSELWAL…VIKIWEKFLD (499 aa).

Belongs to the GlnE family. Requires Mg(2+) as cofactor.

The catalysed reaction is [glutamine synthetase]-O(4)-(5'-adenylyl)-L-tyrosine + phosphate = [glutamine synthetase]-L-tyrosine + ADP. It carries out the reaction [glutamine synthetase]-L-tyrosine + ATP = [glutamine synthetase]-O(4)-(5'-adenylyl)-L-tyrosine + diphosphate. Involved in the regulation of glutamine synthetase GlnA, a key enzyme in the process to assimilate ammonia. When cellular nitrogen levels are high, the C-terminal adenylyl transferase (AT) inactivates GlnA by covalent transfer of an adenylyl group from ATP to specific tyrosine residue of GlnA, thus reducing its activity. Conversely, when nitrogen levels are low, the N-terminal adenylyl removase (AR) activates GlnA by removing the adenylyl group by phosphorolysis, increasing its activity. The regulatory region of GlnE binds the signal transduction protein PII (GlnB) which indicates the nitrogen status of the cell. The protein is Bifunctional glutamine synthetase adenylyltransferase/adenylyl-removing enzyme of Psychromonas ingrahamii (strain DSM 17664 / CCUG 51855 / 37).